Reading from the N-terminus, the 535-residue chain is Succinate-semialdehyde dehydrogenase, mitochondrial (535 aa).

Residues 1-47 (MATCFWLRSCGARRLGSTFPGCRLRPRAGGLVPASGPAPGPAQLRCY) constitute a mitochondrion transit peptide. An N6-acetyllysine; alternate modification is found at Lys126. Lys126 carries the N6-succinyllysine; alternate modification. N6-succinyllysine occurs at positions 135 and 184. Residues Arg213 and 228–231 (KPAE) contribute to the NAD(+) site. Arg213 is a binding site for substrate. Lys265 carries the N6-acetyllysine; alternate modification. Lys265 carries the N6-succinyllysine; alternate modification. 284-289 (GSTTTG) contributes to the NAD(+) binding site. The active-site Proton acceptor is the Glu306. Arg334 lines the substrate pocket. Cys340 acts as the Nucleophile in catalysis. Cys340 and Cys342 are joined by a disulfide. The residue at position 365 (Lys365) is an N6-acetyllysine. Lys402 is modified (N6-succinyllysine). Lys411 is subject to N6-acetyllysine. Residue Ser498 participates in substrate binding. Ser499 is modified (phosphoserine).

It belongs to the aldehyde dehydrogenase family. As to quaternary structure, homotetramer.

The protein resides in the mitochondrion. The enzyme catalyses succinate semialdehyde + NAD(+) + H2O = succinate + NADH + 2 H(+). It participates in amino-acid degradation; 4-aminobutanoate degradation. Redox-regulated. Inhibited under oxydizing conditions. Its function is as follows. Catalyzes one step in the degradation of the inhibitory neurotransmitter gamma-aminobutyric acid (GABA). In Hylobates lar (Lar gibbon), this protein is Succinate-semialdehyde dehydrogenase, mitochondrial (ALDH5A1).